The chain runs to 153 residues: Aspartate carbamoyltransferase regulatory chain (153 aa).

Cysteine 109, cysteine 114, cysteine 138, and cysteine 141 together coordinate Zn(2+).

Belongs to the PyrI family. As to quaternary structure, contains catalytic and regulatory chains. Zn(2+) serves as cofactor.

Involved in allosteric regulation of aspartate carbamoyltransferase. The polypeptide is Aspartate carbamoyltransferase regulatory chain (Cronobacter sakazakii (strain ATCC BAA-894) (Enterobacter sakazakii)).